A 352-amino-acid polypeptide reads, in one-letter code: DNA integrity scanning protein DisA (352 aa).

The DAC domain occupies D3–V143. Residues G70, L88, and I101–T105 each bind ATP.

It belongs to the DisA family. As to quaternary structure, homooctamer. The cofactor is Mg(2+).

The enzyme catalyses 2 ATP = 3',3'-c-di-AMP + 2 diphosphate. Functionally, participates in a DNA-damage check-point that is active prior to asymmetric division when DNA is damaged. DisA forms globular foci that rapidly scan along the chromosomes during sporulation, searching for lesions. When a lesion is present, DisA pauses at the lesion site. This triggers a cellular response that culminates in a temporary block in sporulation initiation. Its function is as follows. Also has diadenylate cyclase activity, catalyzing the condensation of 2 ATP molecules into cyclic di-AMP (c-di-AMP). c-di-AMP acts as a signaling molecule that couples DNA integrity with progression of sporulation. The rise in c-di-AMP level generated by DisA while scanning the chromosome, operates as a positive signal that advances sporulation; upon encountering a lesion, the DisA focus arrests at the damaged site and halts c-di-AMP synthesis. The protein is DNA integrity scanning protein DisA of Carboxydothermus hydrogenoformans (strain ATCC BAA-161 / DSM 6008 / Z-2901).